The chain runs to 274 residues: 2,3,4,5-tetrahydropyridine-2,6-dicarboxylate N-succinyltransferase (274 aa).

Substrate is bound by residues Arg-104 and Asp-141.

The protein belongs to the transferase hexapeptide repeat family. In terms of assembly, homotrimer.

It localises to the cytoplasm. It carries out the reaction (S)-2,3,4,5-tetrahydrodipicolinate + succinyl-CoA + H2O = (S)-2-succinylamino-6-oxoheptanedioate + CoA. It functions in the pathway amino-acid biosynthesis; L-lysine biosynthesis via DAP pathway; LL-2,6-diaminopimelate from (S)-tetrahydrodipicolinate (succinylase route): step 1/3. This Shigella dysenteriae serotype 1 (strain Sd197) protein is 2,3,4,5-tetrahydropyridine-2,6-dicarboxylate N-succinyltransferase.